The chain runs to 89 residues: Small ribosomal subunit protein uS14A (89 aa).

It belongs to the universal ribosomal protein uS14 family. As to quaternary structure, part of the 30S ribosomal subunit. Contacts proteins S3 and S10.

Functionally, binds 16S rRNA, required for the assembly of 30S particles and may also be responsible for determining the conformation of the 16S rRNA at the A site. In Limosilactobacillus reuteri (strain DSM 20016) (Lactobacillus reuteri), this protein is Small ribosomal subunit protein uS14A.